The primary structure comprises 171 residues: Inosine/xanthosine triphosphatase (171 aa).

Thr8–Lys13 is a binding site for substrate. Positions 38 and 68 each coordinate Mg(2+). A substrate-binding site is contributed by Glu68–Ala69.

Belongs to the YjjX NTPase family. In terms of assembly, homodimer. Mg(2+) serves as cofactor. It depends on Mn(2+) as a cofactor.

The enzyme catalyses XTP + H2O = XDP + phosphate + H(+). The catalysed reaction is ITP + H2O = IDP + phosphate + H(+). In terms of biological role, phosphatase that hydrolyzes non-canonical purine nucleotides such as XTP and ITP to their respective diphosphate derivatives. Probably excludes non-canonical purines from DNA/RNA precursor pool, thus preventing their incorporation into DNA/RNA and avoiding chromosomal lesions. The chain is Inosine/xanthosine triphosphatase (yjjX) from Salmonella arizonae (strain ATCC BAA-731 / CDC346-86 / RSK2980).